Here is a 185-residue protein sequence, read N- to C-terminus: Lysozyme g (185 aa).

Glutamate 73 is a catalytic residue.

The protein belongs to the glycosyl hydrolase 23 family.

The catalysed reaction is Hydrolysis of (1-&gt;4)-beta-linkages between N-acetylmuramic acid and N-acetyl-D-glucosamine residues in a peptidoglycan and between N-acetyl-D-glucosamine residues in chitodextrins.. This chain is Lysozyme g, found in Cyprinus carpio (Common carp).